An 85-amino-acid polypeptide reads, in one-letter code: Large ribosomal subunit protein bL27 (85 aa).

Residues 1-24 (MAHKKAGGSSRNGRDSNSKRLGVK) are disordered.

This sequence belongs to the bacterial ribosomal protein bL27 family.

In Nitrosospira multiformis (strain ATCC 25196 / NCIMB 11849 / C 71), this protein is Large ribosomal subunit protein bL27.